A 250-amino-acid chain; its full sequence is NAD(P)H-quinone oxidoreductase subunit K (250 aa).

Cysteine 60, cysteine 61, cysteine 125, and cysteine 156 together coordinate [4Fe-4S] cluster. Positions 230 to 250 (ELNTSEIDASPASQPSSTYES) are disordered. Residues 231–250 (LNTSEIDASPASQPSSTYES) show a composition bias toward polar residues.

Belongs to the complex I 20 kDa subunit family. As to quaternary structure, NDH-1 can be composed of about 15 different subunits; different subcomplexes with different compositions have been identified which probably have different functions. [4Fe-4S] cluster serves as cofactor.

It is found in the cellular thylakoid membrane. It catalyses the reaction a plastoquinone + NADH + (n+1) H(+)(in) = a plastoquinol + NAD(+) + n H(+)(out). The catalysed reaction is a plastoquinone + NADPH + (n+1) H(+)(in) = a plastoquinol + NADP(+) + n H(+)(out). In terms of biological role, NDH-1 shuttles electrons from an unknown electron donor, via FMN and iron-sulfur (Fe-S) centers, to quinones in the respiratory and/or the photosynthetic chain. The immediate electron acceptor for the enzyme in this species is believed to be plastoquinone. Couples the redox reaction to proton translocation, and thus conserves the redox energy in a proton gradient. Cyanobacterial NDH-1 also plays a role in inorganic carbon-concentration. The polypeptide is NAD(P)H-quinone oxidoreductase subunit K (Prochlorococcus marinus (strain MIT 9303)).